The chain runs to 677 residues: mRNA 3'-end-processing protein RNA14 (677 aa).

6 HAT repeats span residues 56 to 88, 90 to 124, 138 to 170, 181 to 214, 257 to 289, and 298 to 330; these read ESYA…GELA, DEFE…YIRR, VIVK…FLEQ, QRID…WEQE, RTAN…WERE, and MLSQ…YISE.

In terms of assembly, component of the CFIA complex, which is composed of RNA14, RNA15, PCF11 and CLP1. Interacts with FIP1, PFS2, YSH1 and probably also with RNA15. Probably interacts with the phosphorylated CTD domain of RPB1/RNA polymerase II.

The protein resides in the nucleus. The protein localises to the cytoplasm. Component of the cleavage factor IA (CFIA) complex, which is involved in the endonucleolytic cleavage during polyadenylation-dependent pre-mRNA 3'-end formation and cooperates with the cleavage factor NAB4/CFIB and the cleavage and polyadenylation factor (CPF) complex. This Saccharomyces cerevisiae (strain ATCC 204508 / S288c) (Baker's yeast) protein is mRNA 3'-end-processing protein RNA14 (RNA14).